Consider the following 570-residue polypeptide: Dihydroxy-acid dehydratase (570 aa).

Position 61 (cysteine 61) interacts with [2Fe-2S] cluster. Aspartate 94 is a binding site for Mg(2+). Position 135 (cysteine 135) interacts with [2Fe-2S] cluster. Mg(2+)-binding residues include aspartate 136 and lysine 137. Lysine 137 carries the N6-carboxylysine modification. Position 207 (cysteine 207) interacts with [2Fe-2S] cluster. Glutamate 459 is a binding site for Mg(2+). Catalysis depends on serine 485, which acts as the Proton acceptor.

Belongs to the IlvD/Edd family. As to quaternary structure, homodimer. [2Fe-2S] cluster serves as cofactor. It depends on Mg(2+) as a cofactor.

The enzyme catalyses (2R)-2,3-dihydroxy-3-methylbutanoate = 3-methyl-2-oxobutanoate + H2O. It catalyses the reaction (2R,3R)-2,3-dihydroxy-3-methylpentanoate = (S)-3-methyl-2-oxopentanoate + H2O. It functions in the pathway amino-acid biosynthesis; L-isoleucine biosynthesis; L-isoleucine from 2-oxobutanoate: step 3/4. It participates in amino-acid biosynthesis; L-valine biosynthesis; L-valine from pyruvate: step 3/4. Its function is as follows. Functions in the biosynthesis of branched-chain amino acids. Catalyzes the dehydration of (2R,3R)-2,3-dihydroxy-3-methylpentanoate (2,3-dihydroxy-3-methylvalerate) into 2-oxo-3-methylpentanoate (2-oxo-3-methylvalerate) and of (2R)-2,3-dihydroxy-3-methylbutanoate (2,3-dihydroxyisovalerate) into 2-oxo-3-methylbutanoate (2-oxoisovalerate), the penultimate precursor to L-isoleucine and L-valine, respectively. The chain is Dihydroxy-acid dehydratase from Lactococcus lactis subsp. cremoris (strain SK11).